A 101-amino-acid chain; its full sequence is ATP-dependent Clp protease adapter protein ClpS (101 aa).

The protein belongs to the ClpS family. Binds to the N-terminal domain of the chaperone ClpA.

Its function is as follows. Involved in the modulation of the specificity of the ClpAP-mediated ATP-dependent protein degradation. The chain is ATP-dependent Clp protease adapter protein ClpS from Mycobacterium bovis (strain ATCC BAA-935 / AF2122/97).